A 314-amino-acid polypeptide reads, in one-letter code: Transcriptional regulatory protein GlnL (314 aa).

Positions 2 to 118 (RFFIADDDRA…EIVTVLQKVK (117 aa)) constitute a Response regulatory domain. Residue D54 is modified to 4-aspartylphosphate.

In terms of processing, phosphorylated by GlnK.

The protein localises to the cytoplasm. Member of the two-component regulatory system GlnL/GlnK that positively regulates the expression of the glsA-glnT operon in response to glutamine. GlnL binds the promoter region of glsA-glnT in vitro. This chain is Transcriptional regulatory protein GlnL (glnL), found in Bacillus subtilis (strain 168).